The chain runs to 216 residues: Lipoprotein signal peptidase (216 aa).

The segment at 1 to 21 (MATSRTAPTRAPSLRSSPALE) is disordered. Helical transmembrane passes span 31–51 (VGALVILAVVALCVYLMDQIT), 89–109 (GSTWIFSLVGVGVLGFVIWYA), and 114–134 (STAWAILFGLLLGGLLGNLTD). Catalysis depends on residues Asp149 and Asp164. A helical membrane pass occupies residues 159 to 179 (IFNLADVAIVFSMGLFLLLTL). The segment at 189–216 (QRDEGAGVSSASPAGDESAADKPENLSA) is disordered. The segment covering 207–216 (AADKPENLSA) has biased composition (basic and acidic residues).

This sequence belongs to the peptidase A8 family.

Its subcellular location is the cell membrane. The enzyme catalyses Release of signal peptides from bacterial membrane prolipoproteins. Hydrolyzes -Xaa-Yaa-Zaa-|-(S,diacylglyceryl)Cys-, in which Xaa is hydrophobic (preferably Leu), and Yaa (Ala or Ser) and Zaa (Gly or Ala) have small, neutral side chains.. Its pathway is protein modification; lipoprotein biosynthesis (signal peptide cleavage). In terms of biological role, this protein specifically catalyzes the removal of signal peptides from prolipoproteins. This Leifsonia xyli subsp. xyli (strain CTCB07) protein is Lipoprotein signal peptidase.